Reading from the N-terminus, the 424-residue chain is Serine--tRNA ligase (424 aa).

230-232 (TAE) contributes to the L-serine binding site. Residue 261-263 (RSE) participates in ATP binding. Glu284 serves as a coordination point for L-serine. Residue 348-351 (EISS) coordinates ATP. Position 384 (Ser384) interacts with L-serine.

Belongs to the class-II aminoacyl-tRNA synthetase family. Type-1 seryl-tRNA synthetase subfamily. In terms of assembly, homodimer. The tRNA molecule binds across the dimer.

The protein resides in the cytoplasm. The enzyme catalyses tRNA(Ser) + L-serine + ATP = L-seryl-tRNA(Ser) + AMP + diphosphate + H(+). It catalyses the reaction tRNA(Sec) + L-serine + ATP = L-seryl-tRNA(Sec) + AMP + diphosphate + H(+). Its pathway is aminoacyl-tRNA biosynthesis; selenocysteinyl-tRNA(Sec) biosynthesis; L-seryl-tRNA(Sec) from L-serine and tRNA(Sec): step 1/1. In terms of biological role, catalyzes the attachment of serine to tRNA(Ser). Is also able to aminoacylate tRNA(Sec) with serine, to form the misacylated tRNA L-seryl-tRNA(Sec), which will be further converted into selenocysteinyl-tRNA(Sec). This is Serine--tRNA ligase from Streptococcus pneumoniae (strain ATCC 700669 / Spain 23F-1).